Consider the following 119-residue polypeptide: Large ribosomal subunit protein uL18 (119 aa).

This sequence belongs to the universal ribosomal protein uL18 family. As to quaternary structure, part of the 50S ribosomal subunit; part of the 5S rRNA/L5/L18/L25 subcomplex. Contacts the 5S and 23S rRNAs.

In terms of biological role, this is one of the proteins that bind and probably mediate the attachment of the 5S RNA into the large ribosomal subunit, where it forms part of the central protuberance. The polypeptide is Large ribosomal subunit protein uL18 (Chlorobium luteolum (strain DSM 273 / BCRC 81028 / 2530) (Pelodictyon luteolum)).